The following is a 407-amino-acid chain: Protein S-acyltransferase 8 (407 aa).

2 helical membrane-spanning segments follow: residues 29 to 49 (SLPL…VFVA) and 62 to 82 (GYAI…LLFF). In terms of domain architecture, DHHC spans 136–186 (KYCDTCMLYRPPRCSHCSICNNCVERFDHHCPWVGQCIGLRNYRYFFMFVS). Cys166 serves as the catalytic S-palmitoyl cysteine intermediate. 2 helical membrane passes run 181 to 201 (FFMF…MSAV) and 224 to 244 (AVVL…LTAF). Residues 348–368 (AEDANNNQPHHTLDIDHERAG) form a disordered region. Positions 358 to 368 (HTLDIDHERAG) are enriched in basic and acidic residues. A Phosphoserine modification is found at Ser385.

It belongs to the DHHC palmitoyltransferase family. In terms of tissue distribution, expressed in flowers and pollen.

The protein resides in the cell membrane. It catalyses the reaction L-cysteinyl-[protein] + hexadecanoyl-CoA = S-hexadecanoyl-L-cysteinyl-[protein] + CoA. Functionally, S-acyltransferase involved in protein lipid modification. This chain is Protein S-acyltransferase 8 (PAT08), found in Arabidopsis thaliana (Mouse-ear cress).